A 361-amino-acid chain; its full sequence is Caspase activity and apoptosis inhibitor 1 (361 aa).

A compositionally biased stretch (basic residues) spans 1–14 (MTGKKSSREKRRKR). Disordered regions lie at residues 1 to 28 (MTGK…APDI) and 67 to 100 (GGSG…GSLQ). Residues 19–28 (AAAALAAPDI) show a composition bias toward low complexity. Serine 89 carries the post-translational modification Phosphoserine. Threonine 90 is modified (phosphothreonine). Lysine 104 participates in a covalent cross-link: Glycyl lysine isopeptide (Lys-Gly) (interchain with G-Cter in SUMO2). 2 positions are modified to phosphoserine: serine 120 and serine 203. Disordered regions lie at residues 198–218 (DNGM…MGSD) and 230–331 (ASSV…DVQP). Residues 199–210 (NGMDSDMEEEAD) show a composition bias toward acidic residues. Basic and acidic residues predominate over residues 234–251 (RENKQPEGLELKQGKGED). Residues 272–281 (EEAAAPEAPE) show a composition bias toward low complexity. A coiled-coil region spans residues 281–311 (ENTVQSEAGQIDDLEKDIEKSVNEILGLAES). Serine 312 carries the post-translational modification Phosphoserine.

As to expression, ubiquitous.

Its function is as follows. Anti-apoptotic protein that modulates a caspase-10 dependent mitochondrial caspase-3/9 feedback amplification loop. In Homo sapiens (Human), this protein is Caspase activity and apoptosis inhibitor 1 (CAAP1).